Here is a 463-residue protein sequence, read N- to C-terminus: ATP-dependent protease ATPase subunit HslU (463 aa).

Residues Val21, 63-68, Asp276, Glu341, and Arg413 contribute to the ATP site; that span reads GVGKTE.

This sequence belongs to the ClpX chaperone family. HslU subfamily. As to quaternary structure, a double ring-shaped homohexamer of HslV is capped on each side by a ring-shaped HslU homohexamer. The assembly of the HslU/HslV complex is dependent on binding of ATP.

The protein resides in the cytoplasm. ATPase subunit of a proteasome-like degradation complex; this subunit has chaperone activity. The binding of ATP and its subsequent hydrolysis by HslU are essential for unfolding of protein substrates subsequently hydrolyzed by HslV. HslU recognizes the N-terminal part of its protein substrates and unfolds these before they are guided to HslV for hydrolysis. This Thermotoga sp. (strain RQ2) protein is ATP-dependent protease ATPase subunit HslU.